The chain runs to 205 residues: Holliday junction branch migration complex subunit RuvA (205 aa).

Positions 1–64 are domain I; the sequence is MIGRIRGLLI…EDAQLLYGFI (64 aa). The domain II stretch occupies residues 65–143; that stretch reads SKQERSLFRL…SLMEASVGSE (79 aa). Positions 144–156 are flexible linker; the sequence is REFMLQSNYTAPE. The domain III stretch occupies residues 157–205; that stretch reads AVNTAEEDAIAALLSLGYKPAQASKAVSSVYTDGMSSETLIKSALKSML.

The protein belongs to the RuvA family. Homotetramer. Forms an RuvA(8)-RuvB(12)-Holliday junction (HJ) complex. HJ DNA is sandwiched between 2 RuvA tetramers; dsDNA enters through RuvA and exits via RuvB. An RuvB hexamer assembles on each DNA strand where it exits the tetramer. Each RuvB hexamer is contacted by two RuvA subunits (via domain III) on 2 adjacent RuvB subunits; this complex drives branch migration. In the full resolvosome a probable DNA-RuvA(4)-RuvB(12)-RuvC(2) complex forms which resolves the HJ.

Its subcellular location is the cytoplasm. Functionally, the RuvA-RuvB-RuvC complex processes Holliday junction (HJ) DNA during genetic recombination and DNA repair, while the RuvA-RuvB complex plays an important role in the rescue of blocked DNA replication forks via replication fork reversal (RFR). RuvA specifically binds to HJ cruciform DNA, conferring on it an open structure. The RuvB hexamer acts as an ATP-dependent pump, pulling dsDNA into and through the RuvAB complex. HJ branch migration allows RuvC to scan DNA until it finds its consensus sequence, where it cleaves and resolves the cruciform DNA. The chain is Holliday junction branch migration complex subunit RuvA from Shewanella halifaxensis (strain HAW-EB4).